The chain runs to 54 residues: UPF0181 protein PM0480 (54 aa).

It belongs to the UPF0181 family.

The sequence is that of UPF0181 protein PM0480 from Pasteurella multocida (strain Pm70).